Reading from the N-terminus, the 131-residue chain is Small ribosomal subunit protein uS8 (131 aa).

The protein belongs to the universal ribosomal protein uS8 family. Part of the 30S ribosomal subunit. Contacts proteins S5 and S12.

Functionally, one of the primary rRNA binding proteins, it binds directly to 16S rRNA central domain where it helps coordinate assembly of the platform of the 30S subunit. The chain is Small ribosomal subunit protein uS8 from Chromobacterium violaceum (strain ATCC 12472 / DSM 30191 / JCM 1249 / CCUG 213 / NBRC 12614 / NCIMB 9131 / NCTC 9757 / MK).